A 412-amino-acid polypeptide reads, in one-letter code: CCA-adding enzyme (412 aa).

G8 and R11 together coordinate ATP. 2 residues coordinate CTP: G8 and R11. Mg(2+)-binding residues include D21 and D23. ATP is bound by residues R91, R137, and R140. CTP-binding residues include R91, R137, and R140.

Belongs to the tRNA nucleotidyltransferase/poly(A) polymerase family. Bacterial CCA-adding enzyme type 2 subfamily. Mg(2+) is required as a cofactor.

The catalysed reaction is a tRNA precursor + 2 CTP + ATP = a tRNA with a 3' CCA end + 3 diphosphate. It catalyses the reaction a tRNA with a 3' CCA end + 2 CTP + ATP = a tRNA with a 3' CCACCA end + 3 diphosphate. Functionally, catalyzes the addition and repair of the essential 3'-terminal CCA sequence in tRNAs without using a nucleic acid template. Adds these three nucleotides in the order of C, C, and A to the tRNA nucleotide-73, using CTP and ATP as substrates and producing inorganic pyrophosphate. tRNA 3'-terminal CCA addition is required both for tRNA processing and repair. Also involved in tRNA surveillance by mediating tandem CCA addition to generate a CCACCA at the 3' terminus of unstable tRNAs. While stable tRNAs receive only 3'-terminal CCA, unstable tRNAs are marked with CCACCA and rapidly degraded. The polypeptide is CCA-adding enzyme (Buchnera aphidicola subsp. Schizaphis graminum (strain Sg)).